The sequence spans 130 residues: MRHYEIVFMVHPDQSEQVPGMIERYTATITGAQGTIHRLEDWGRRQLAYPINKLHKAHYVLLNVEAPQEAIDELETNFRFNDAVIRSMVMRVKHAVTEASPMVKAKDERRERREDFAEAGDDVDAGDSEE.

The interval 100–130 (SPMVKAKDERRERREDFAEAGDDVDAGDSEE) is disordered. Basic and acidic residues predominate over residues 104–116 (KAKDERRERREDF). Acidic residues predominate over residues 117-130 (AEAGDDVDAGDSEE).

The protein belongs to the bacterial ribosomal protein bS6 family.

Its function is as follows. Binds together with bS18 to 16S ribosomal RNA. This Pectobacterium carotovorum subsp. carotovorum (strain PC1) protein is Small ribosomal subunit protein bS6.